The sequence spans 404 residues: Double-stranded RNA-binding protein 5 (404 aa).

DRBM domains lie at 1 to 70 and 87 to 155; these read MYKN…RLSL and VYKN…SLKQ. Disordered stretches follow at residues 195-236, 263-320, and 336-362; these read RRRR…STEE, GGRT…RRNA, and RRRP…FSDP. Residues 263–280 show a composition bias toward low complexity; sequence GGRTQDTASPAPAAAAAS. The segment covering 302–316 has biased composition (basic residues); sequence AGAHAARRHAARQGG.

Functionally, binds double-stranded RNA. The chain is Double-stranded RNA-binding protein 5 (DRB5) from Oryza sativa subsp. japonica (Rice).